Reading from the N-terminus, the 278-residue chain is Aliphatic sulfonates import ATP-binding protein SsuB (278 aa).

Residues Leu-15–Leu-236 enclose the ABC transporter domain. ATP is bound at residue Gly-47–Ser-54. A compositionally biased stretch (basic and acidic residues) spans Pro-251 to Pro-264. The disordered stretch occupies residues Pro-251–Val-278.

Belongs to the ABC transporter superfamily. Aliphatic sulfonates importer (TC 3.A.1.17.2) family. In terms of assembly, the complex is composed of two ATP-binding proteins (SsuB), two transmembrane proteins (SsuC) and a solute-binding protein (SsuA).

The protein resides in the cell inner membrane. It carries out the reaction ATP + H2O + aliphatic sulfonate-[sulfonate-binding protein]Side 1 = ADP + phosphate + aliphatic sulfonateSide 2 + [sulfonate-binding protein]Side 1.. In terms of biological role, part of the ABC transporter complex SsuABC involved in aliphatic sulfonates import. Responsible for energy coupling to the transport system. The sequence is that of Aliphatic sulfonates import ATP-binding protein SsuB from Albidiferax ferrireducens (strain ATCC BAA-621 / DSM 15236 / T118) (Rhodoferax ferrireducens).